The chain runs to 215 residues: Ribose-5-phosphate isomerase A (215 aa).

Substrate contacts are provided by residues 26 to 29, 79 to 82, and 92 to 95; these read TGST, DGAD, and KGGG. The active-site Proton acceptor is Glu-101. Lys-119 serves as a coordination point for substrate.

The protein belongs to the ribose 5-phosphate isomerase family. In terms of assembly, homodimer.

The enzyme catalyses aldehydo-D-ribose 5-phosphate = D-ribulose 5-phosphate. It participates in carbohydrate degradation; pentose phosphate pathway; D-ribose 5-phosphate from D-ribulose 5-phosphate (non-oxidative stage): step 1/1. In terms of biological role, catalyzes the reversible conversion of ribose-5-phosphate to ribulose 5-phosphate. This is Ribose-5-phosphate isomerase A from Stenotrophomonas maltophilia (strain R551-3).